The primary structure comprises 132 residues: Small ribosomal subunit protein uS8 (132 aa).

This sequence belongs to the universal ribosomal protein uS8 family. Part of the 30S ribosomal subunit. Contacts proteins S5 and S12.

In terms of biological role, one of the primary rRNA binding proteins, it binds directly to 16S rRNA central domain where it helps coordinate assembly of the platform of the 30S subunit. The chain is Small ribosomal subunit protein uS8 from Agrobacterium fabrum (strain C58 / ATCC 33970) (Agrobacterium tumefaciens (strain C58)).